Reading from the N-terminus, the 138-residue chain is UPF0047 protein MJ1081 (138 aa).

It belongs to the UPF0047 family.

The protein is UPF0047 protein MJ1081 of Methanocaldococcus jannaschii (strain ATCC 43067 / DSM 2661 / JAL-1 / JCM 10045 / NBRC 100440) (Methanococcus jannaschii).